We begin with the raw amino-acid sequence, 174 residues long: MTLILGIDPGSRITGYGVVRQTARGCEYVASGCIRTGSGELHERLQIVFRGVSEIIAQHGPVTMGIERVFMARNADSALKLGQARGAAIVAAAEAGLEIAEYSATQVKQAVAGTGGANKEQVMMMVMHLLKLTQKPQIDASDALAIALCHAHTRSSLVPHGLSTARRRGGRLRL.

Catalysis depends on residues Asp8, Glu67, and Asp139. Asp8, Glu67, and Asp139 together coordinate Mg(2+).

This sequence belongs to the RuvC family. As to quaternary structure, homodimer which binds Holliday junction (HJ) DNA. The HJ becomes 2-fold symmetrical on binding to RuvC with unstacked arms; it has a different conformation from HJ DNA in complex with RuvA. In the full resolvosome a probable DNA-RuvA(4)-RuvB(12)-RuvC(2) complex forms which resolves the HJ. The cofactor is Mg(2+).

It localises to the cytoplasm. The catalysed reaction is Endonucleolytic cleavage at a junction such as a reciprocal single-stranded crossover between two homologous DNA duplexes (Holliday junction).. Its function is as follows. The RuvA-RuvB-RuvC complex processes Holliday junction (HJ) DNA during genetic recombination and DNA repair. Endonuclease that resolves HJ intermediates. Cleaves cruciform DNA by making single-stranded nicks across the HJ at symmetrical positions within the homologous arms, yielding a 5'-phosphate and a 3'-hydroxyl group; requires a central core of homology in the junction. The consensus cleavage sequence is 5'-(A/T)TT(C/G)-3'. Cleavage occurs on the 3'-side of the TT dinucleotide at the point of strand exchange. HJ branch migration catalyzed by RuvA-RuvB allows RuvC to scan DNA until it finds its consensus sequence, where it cleaves and resolves the cruciform DNA. This chain is Crossover junction endodeoxyribonuclease RuvC, found in Pseudomonas putida (strain ATCC 700007 / DSM 6899 / JCM 31910 / BCRC 17059 / LMG 24140 / F1).